The chain runs to 399 residues: Elongation factor Tu (399 aa).

Residues Lys-10 to Ala-209 form the tr-type G domain. The interval Gly-19 to Thr-26 is G1. Gly-19–Thr-26 is a binding site for GTP. Mg(2+) is bound at residue Thr-26. The segment at Gly-60–Ala-64 is G2. Residues Asp-81–Gly-84 form a G3 region. Residues Asp-81–His-85 and Asn-136–Asp-139 each bind GTP. The tract at residues Asn-136–Asp-139 is G4. Residues Ser-174–Leu-176 are G5.

Belongs to the TRAFAC class translation factor GTPase superfamily. Classic translation factor GTPase family. EF-Tu/EF-1A subfamily. As to quaternary structure, monomer.

It is found in the cytoplasm. The catalysed reaction is GTP + H2O = GDP + phosphate + H(+). Functionally, GTP hydrolase that promotes the GTP-dependent binding of aminoacyl-tRNA to the A-site of ribosomes during protein biosynthesis. This Campylobacter lari (strain RM2100 / D67 / ATCC BAA-1060) protein is Elongation factor Tu.